A 217-amino-acid polypeptide reads, in one-letter code: MNKLITVAIDGPAGAGKSTIAKIIGEKFNLMYINTGSMYRAVTLKALENNISAEEVDKLLVMIDGMDMHFENDELILNGENINSLITMPNISKNVSAYASIREVRERLVNLMRKMALKYSVIMDGRDIGTVVLKDANFKFFLTASPEERADRRYKELMGKGVEVNYDEILQDIIKRDYLDSNREVDPLRKAEDAIEIDTTGIGIMGVVEKISSYMEK.

An ATP-binding site is contributed by 11-19 (GPAGAGKST).

Belongs to the cytidylate kinase family. Type 1 subfamily.

The protein localises to the cytoplasm. The catalysed reaction is CMP + ATP = CDP + ADP. It carries out the reaction dCMP + ATP = dCDP + ADP. This is Cytidylate kinase from Clostridium perfringens (strain ATCC 13124 / DSM 756 / JCM 1290 / NCIMB 6125 / NCTC 8237 / Type A).